The chain runs to 210 residues: MASMGLQVLGISLAVLGWLGIILSCALPMWRVTAFIGSNIVTAQTSWEGLWMNCVVQSTGQMQCKMYDSMLALPQDLQAARALMVISIIVGALGMLLSVVGGKCTNCMEDETVKAKIMITAGAVFIVASMLIMVPVSWTAHNVIRDFYNPMVASGQKREMGASLYVGWAASGLLLLGGGLLCCSCPPRSNDKPYSAKYSAARSVPASNYV.

At 1 to 7 (MASMGLQ) the chain is on the cytoplasmic side. The interaction with EPHA2 stretch occupies residues 1 to 103 (MASMGLQVLG…GMLLSVVGGK (103 aa)). Residues 8-28 (VLGISLAVLGWLGIILSCALP) traverse the membrane as a helical segment. The Extracellular segment spans residues 29–81 (MWRVTAFIGSNIVTAQTSWEGLWMNCVVQSTGQMQCKMYDSMLALPQDLQAAR). C54 and C64 form a disulfide bridge. Residues 82 to 102 (ALMVISIIVGALGMLLSVVGG) form a helical membrane-spanning segment. Topologically, residues 103 to 116 (KCTNCMEDETVKAK) are cytoplasmic. The chain crosses the membrane as a helical span at residues 117–137 (IMITAGAVFIVASMLIMVPVS). Over 138–160 (WTAHNVIRDFYNPMVASGQKREM) the chain is Extracellular. A helical membrane pass occupies residues 161 to 181 (GASLYVGWAASGLLLLGGGLL). Residues 182–210 (CCSCPPRSNDKPYSAKYSAARSVPASNYV) lie on the Cytoplasmic side of the membrane. Y209 is modified (phosphotyrosine; by EPHA2). Residues 209–210 (YV) are interactions with TJP1, TJP2 and TJP3.

This sequence belongs to the claudin family. Can form heteropolymeric strands with other claudins. Interacts with CLDN8. Interacts with CLDN1. Directly interacts with TJP1/ZO-1, TJP2/ZO-2 and TJP3/ZO-3. Interacts with EPHA2; phosphorylates CLDN4 and may regulate tight junctions. Phosphorylated. Phosphorylation by EPHA2 is stimulated by EFNA1 and alters interaction with TJP1. In terms of tissue distribution, expressed primarily in lung and kidney. Present in both cortical and medullar collecting ducts (at protein level).

It is found in the cell junction. The protein resides in the tight junction. It localises to the cell membrane. The enzyme catalyses chloride(in) = chloride(out). It catalyses the reaction bromide(in) = bromide(out). The catalysed reaction is iodide(out) = iodide(in). It carries out the reaction fluoride(in) = fluoride(out). Functionally, can associate with other claudins to regulate tight junction structural and functional strand dynamics. May coassemble with CLDN8 into tight junction strands containing anion-selective channels that convey paracellular chloride permeability in renal collecting ducts. May integrate into CLDN3 strands to modulate localized tight junction barrier properties. May disrupt strand assembly of channel-forming CLDN2 and CLDN15 and inhibit cation conductance. Cannot form tight junction strands on its own. The protein is Claudin-4 of Mus musculus (Mouse).